The following is a 236-amino-acid chain: Eukaryotic translation initiation factor 3 subunit J (236 aa).

A disordered region spans residues 1–88 (MADDWESAAD…EAEAQRVASL (88 aa)). The span at 28–46 (GEDEDEDIKDSWEDEEEKK) shows a compositional bias: acidic residues. Composition is skewed to basic and acidic residues over residues 47–58 (DEEKPTKTEAPA) and 68–77 (AKLEQQARLE).

The protein belongs to the eIF-3 subunit J family. Component of the eukaryotic translation initiation factor 3 (eIF-3) complex. The eIF-3 complex interacts with pix.

It is found in the cytoplasm. Functionally, component of the eukaryotic translation initiation factor 3 (eIF-3) complex, which is involved in protein synthesis of a specialized repertoire of mRNAs and, together with other initiation factors, stimulates binding of mRNA and methionyl-tRNAi to the 40S ribosome. The eIF-3 complex specifically targets and initiates translation of a subset of mRNAs involved in cell proliferation. This is Eukaryotic translation initiation factor 3 subunit J from Drosophila erecta (Fruit fly).